The sequence spans 309 residues: Homoserine O-succinyltransferase (309 aa).

C142 serves as the catalytic Acyl-thioester intermediate. Substrate-binding residues include K163 and S192. Catalysis depends on H235, which acts as the Proton acceptor. E237 is a catalytic residue. A substrate-binding site is contributed by R249.

Belongs to the MetA family. In terms of assembly, homodimer.

It is found in the cytoplasm. It carries out the reaction L-homoserine + succinyl-CoA = O-succinyl-L-homoserine + CoA. Its pathway is amino-acid biosynthesis; L-methionine biosynthesis via de novo pathway; O-succinyl-L-homoserine from L-homoserine: step 1/1. Transfers a succinyl group from succinyl-CoA to L-homoserine, forming succinyl-L-homoserine. This Escherichia coli (strain K12 / MC4100 / BW2952) protein is Homoserine O-succinyltransferase.